A 100-amino-acid polypeptide reads, in one-letter code: Integration host factor subunit alpha (100 aa).

The protein belongs to the bacterial histone-like protein family. Heterodimer of an alpha and a beta chain.

Functionally, this protein is one of the two subunits of integration host factor, a specific DNA-binding protein that functions in genetic recombination as well as in transcriptional and translational control. In Caulobacter vibrioides (strain ATCC 19089 / CIP 103742 / CB 15) (Caulobacter crescentus), this protein is Integration host factor subunit alpha.